The following is a 272-amino-acid chain: Undecaprenyl-diphosphatase (272 aa).

8 helical membrane-spanning segments follow: residues 2–22 (LELI…WLPI), 50–70 (VIQL…LFPF), 83–103 (FSLW…GVPF), 110–130 (LFYN…LFII), 148–168 (LGYK…IPGT), 195–215 (LAIP…GFAF), 220–240 (LIIL…AIKF), and 250–270 (FKAF…YFLA).

The protein belongs to the UppP family.

It localises to the cell membrane. The enzyme catalyses di-trans,octa-cis-undecaprenyl diphosphate + H2O = di-trans,octa-cis-undecaprenyl phosphate + phosphate + H(+). Its function is as follows. Catalyzes the dephosphorylation of undecaprenyl diphosphate (UPP). Confers resistance to bacitracin. The protein is Undecaprenyl-diphosphatase of Acetivibrio thermocellus (strain ATCC 27405 / DSM 1237 / JCM 9322 / NBRC 103400 / NCIMB 10682 / NRRL B-4536 / VPI 7372) (Clostridium thermocellum).